The chain runs to 112 residues: B3 domain-containing protein At1g43171 (112 aa).

Positions 19–112 form a DNA-binding region, TF-B3; sequence DIVGNVALPK…FENKFIVLNF (94 aa).

It is found in the nucleus. This Arabidopsis thaliana (Mouse-ear cress) protein is B3 domain-containing protein At1g43171.